The chain runs to 508 residues: ATP synthase subunit alpha (508 aa).

170–177 contacts ATP; it reads GDRQTGKT.

This sequence belongs to the ATPase alpha/beta chains family. As to quaternary structure, F-type ATPases have 2 components, CF(1) - the catalytic core - and CF(0) - the membrane proton channel. CF(1) has five subunits: alpha(3), beta(3), gamma(1), delta(1), epsilon(1). CF(0) has three main subunits: a(1), b(2) and c(9-12). The alpha and beta chains form an alternating ring which encloses part of the gamma chain. CF(1) is attached to CF(0) by a central stalk formed by the gamma and epsilon chains, while a peripheral stalk is formed by the delta and b chains.

Its subcellular location is the cell inner membrane. The catalysed reaction is ATP + H2O + 4 H(+)(in) = ADP + phosphate + 5 H(+)(out). Functionally, produces ATP from ADP in the presence of a proton gradient across the membrane. The alpha chain is a regulatory subunit. The protein is ATP synthase subunit alpha of Dictyoglomus turgidum (strain DSM 6724 / Z-1310).